A 785-amino-acid polypeptide reads, in one-letter code: MAEWQTECMLPPTQPGFEGVGPHPGRVLQNTSGNIQSYSDTLAHTDPTGRDDHFSHYGFKYPHQPPVPTHPMPTTTGLHPQQVINNRFHTKKLRRLQSLGPNLIGPRRTRSYLKSQKYIEYRARPRRDTGKDGEPVWSDELEDAFQQALEANPPMGRRKWSERGKSYGRNELIAEYIYKTTGKRRSRKQVSSHLQVLDSFLKGDPDWERLVREQPADRSNGQPPSAGPRWRNSLELPFSSHYNSHNYPSYHDSLRPVQSYSGELPPPHVVFHPNLHAEATNINKIYGLSFDMWVSAPNQPGGIESAFHLYTRLQGDQRHPAPPKRLENIPNWRTSFPHLNSVMADVNNPLNCDIILLEANLRLMDDFPPSGSKLGIQLELDFTQPPNGDALTNQMENWSCSTYIYEEGQNIYRARQDLPKQQSNKVKPPFESTWWAKRFTELTEIAKDRQLNELADRQTRDYFRTLTAVQEIRATPSSRRVSNQYPDNSQDDSKRMAILLWQFRQTRSNEVGTTTWRRVTSPSSDRNTIPSPKPVTGIDLPPLSFYANSLARPAPSIYQAPQSHDLVHHNGTSQPQWSMYQPPQDSIFNANGGFDLLNSITKPEGGLHDKTAVTSVLDTYPNLQPEVSQPTSLNGSNGGPGMLSIPDMSLSHTNLNAYNLSGHDNHYGTPQHPGVSVPDNSHVLNNGIFGSSTQSIDDMSQTHAPWPTPTSSITDVGSSNYSHLQFSDHHVPSVSRESHQPNHFEVLLGPDDLIVGSMPGDPGINGAAHGHMNHTYTENNAVEAA.

The interval 1 to 22 is disordered; it reads MAEWQTECMLPPTQPGFEGVGP. A DNA-binding region (TEA) is located at residues 130–204; the sequence is GKDGEPVWSD…QVLDSFLKGD (75 aa). The segment at 213 to 232 is disordered; sequence EQPADRSNGQPPSAGPRWRN.

This sequence belongs to the TEC1 family.

The protein resides in the nucleus. BrlA, abaA and wetA are pivotal regulators of conidiophore development and conidium maturation. They act individually and together to regulate their own expression and that of numerous other sporulation-specific genes. Binds to the sequence 5'-CATTCY-3', where Y is a pyrimidine, making both major- and minor-groove contacts. Controls expression of wetA. The protein is Conidiophore development regulator abaA of Aspergillus oryzae (strain ATCC 42149 / RIB 40) (Yellow koji mold).